Reading from the N-terminus, the 159-residue chain is Succinate dehydrogenase [ubiquinone] cytochrome b small subunit, mitochondrial (159 aa).

A mitochondrion-targeting transit peptide spans 1-56 (MAVLWRLSAVCGAQGGRALLLRTPVVRPAHISAFLQDRPIPEWCGVQHIHLSPGHH). At 57–63 (SGSKAAS) the chain is on the mitochondrial matrix side. The chain crosses the membrane as a helical span at residues 64–85 (LHWTSERVVSVLLLGLLPAAYL). The Mitochondrial intermembrane portion of the chain corresponds to 86–90 (NPCSA). The helical transmembrane segment at 91–111 (MDYSLAATLTLHGHWGLGQVV) threads the bilayer. Residue His-102 coordinates heme b. Over 112–120 (TDYVHGDAS) the chain is Mitochondrial matrix. Tyr-114 is a binding site for a ubiquinone. Residues 121 to 142 (QKAAKAGLLALSALTFAGLCYF) traverse the membrane as a helical segment. Topologically, residues 143-159 (NYHDVGICKAVAMLWKL) are mitochondrial intermembrane.

This sequence belongs to the CybS family. As to quaternary structure, component of complex II composed of four subunits: the flavoprotein (FP) SDHA, iron-sulfur protein (IP) SDHB, and a cytochrome b560 composed of SDHC and SDHD.

It localises to the mitochondrion inner membrane. Its pathway is carbohydrate metabolism; tricarboxylic acid cycle. Functionally, membrane-anchoring subunit of succinate dehydrogenase (SDH) that is involved in complex II of the mitochondrial electron transport chain and is responsible for transferring electrons from succinate to ubiquinone (coenzyme Q). SDH also oxidizes malate to the non-canonical enol form of oxaloacetate, enol-oxaloacetate. Enol-oxaloacetate, which is a potent inhibitor of the succinate dehydrogenase activity, is further isomerized into keto-oxaloacetate. This is Succinate dehydrogenase [ubiquinone] cytochrome b small subunit, mitochondrial (SDHD) from Pongo abelii (Sumatran orangutan).